The sequence spans 61 residues: Metallothionein-2 (61 aa).

N-acetylmethionine is present on M1. Residues 1–29 are beta; it reads MDPNCSCTAGESCTCAGSCKCKDCKCASC. A divalent metal cation-binding residues include C5, C7, C13, C15, C19, C21, C24, C26, C29, C33, C34, C36, C37, C41, C44, C48, C50, and C57. An alpha region spans residues 30 to 61; sequence KKSCCSCCPVGCAKCAQGCVCKGASDKCSCCA. S58 bears the Phosphoserine mark. Residues C59 and C60 each contribute to the a divalent metal cation site.

It belongs to the metallothionein superfamily. Type 1 family. In terms of assembly, interacts with EOLA1.

Functionally, metallothioneins have a high content of cysteine residues that bind various heavy metals; these proteins are transcriptionally regulated by both heavy metals and glucocorticoids. The sequence is that of Metallothionein-2 (MT2A) from Ovis aries (Sheep).